Reading from the N-terminus, the 91-residue chain is Small ribosomal subunit protein uS19 (91 aa).

The protein belongs to the universal ribosomal protein uS19 family.

In terms of biological role, protein S19 forms a complex with S13 that binds strongly to the 16S ribosomal RNA. This is Small ribosomal subunit protein uS19 from Azotobacter vinelandii (strain DJ / ATCC BAA-1303).